Consider the following 319-residue polypeptide: Acetyl esterase (319 aa).

The Involved in the stabilization of the negatively charged intermediate by the formation of the oxyanion hole signature appears at 91 to 93 (HGG). Active-site residues include Ser165, Asp262, and His292.

Belongs to the 'GDXG' lipolytic enzyme family. As to quaternary structure, homodimer. Interacts with MalT and MelA.

The protein localises to the cytoplasm. Functionally, displays esterase activity towards short chain fatty esters (acyl chain length of up to 8 carbons). Able to hydrolyze triacetylglycerol (triacetin) and tributyrylglycerol (tributyrin), but not trioleylglycerol (triolein) or cholesterol oleate. Negatively regulates MalT activity by antagonizing maltotriose binding. Inhibits MelA galactosidase activity. This Shigella boydii serotype 4 (strain Sb227) protein is Acetyl esterase.